The following is a 117-amino-acid chain: Ig heavy chain V region 186-1 (117 aa).

The first 19 residues, 1 to 19 (MGWSCIMLFLAATATGVHS), serve as a signal peptide directing secretion. Residues 20 to 49 (QVQLQQPGAELVKPGASVKLSCKASGYTFT) are framework-1. Cysteines 41 and 115 form a disulfide. The segment at 50–54 (SYWMH) is complementarity-determining-1. A framework-2 region spans residues 55–68 (WVKQRPGRGLEWIG). Positions 69 to 85 (RIDPNSGGTKYNEKFKS) are complementarity-determining-2. The segment at 86-117 (KATLTVDTSSSTAYMQLHSLTSEDSAVYYCAR) is framework-3.

The chain is Ig heavy chain V region 186-1 from Mus musculus (Mouse).